The following is a 347-amino-acid chain: Ubiquitin thioesterase Otu1 (347 aa).

Residues 5-87 (FSVKLKSKKG…LIVEEKAAPA (83 aa)) enclose the Ubiquitin-like domain. The tract at residues 8-89 (KLKSKKGQFI…VEEKAAPAPA (82 aa)) is UBX-like. Positions 150–274 (LLKKVVPADN…GIHYDPLYME (125 aa)) constitute an OTU domain. Residues 155-161 (VPADNSC) form a cys-loop region. The active site involves D158. Catalysis depends on C161, which acts as the Nucleophile. The variable-loop stretch occupies residues 213 to 223 (IQKADSWGGAI). Residues 263-267 (FDGIH) form a his-loop region. I266 lines the substrate pocket. Residue H267 is part of the active site. The segment at 290-295 (LGVYQQ) is S2 site. The segment at 317-341 (LRCMQCDVRLVGQVQAQEHAKQTGH) adopts a C2H2-type zinc-finger fold. Residue H341 is part of the active site.

The enzyme catalyses Thiol-dependent hydrolysis of ester, thioester, amide, peptide and isopeptide bonds formed by the C-terminal Gly of ubiquitin (a 76-residue protein attached to proteins as an intracellular targeting signal).. In terms of biological role, hydrolase that can remove conjugated ubiquitin from proteins and may therefore play an important regulatory role at the level of protein turnover by preventing degradation. Involved in the regulation of DNA damage repair. This chain is Ubiquitin thioesterase Otu1, found in Drosophila melanogaster (Fruit fly).